The sequence spans 403 residues: Casein kinase II subunit alpha-2 (403 aa).

The first 31 residues, methionine 1–serine 31, serve as a signal peptide directing secretion. The 286-residue stretch at tyrosine 104–phenylalanine 389 folds into the Protein kinase domain. Residues valine 110–valine 118 and lysine 133 contribute to the ATP site. Asparagine 182 carries N-linked (GlcNAc...) asparagine glycosylation. Aspartate 221 (proton acceptor) is an active-site residue.

The protein belongs to the protein kinase superfamily. Ser/Thr protein kinase family. CK2 subfamily. In terms of assembly, heterotetramer of two catalytic alpha subunits and two regulatory beta subunits. Seems to be present in all plant organs. But seems to be more expressed than CKA1.

Its subcellular location is the nucleus. The protein localises to the nucleolus. The enzyme catalyses L-seryl-[protein] + ATP = O-phospho-L-seryl-[protein] + ADP + H(+). It carries out the reaction L-threonyl-[protein] + ATP = O-phospho-L-threonyl-[protein] + ADP + H(+). Casein kinases are operationally defined by their preferential utilization of acidic proteins such as caseins as substrates. The alpha chain contains the catalytic site. The tetrameric holoenzyme CK2, composed of two alpha and two beta subunits, phosphorylates the transcription factor PIF1 after an exposure to light, resulting in a proteasome-dependent degradation of PIF1 and promotion of photomorphogenesis. CK2 phosphorylates translation initiation factors. May participate in the regulation of the initiation of translation. Acts as circadian clock component that maintains the correct period length through phosphorylation of CCA1. May act as an ectokinase that phosphorylates several extracellular proteins. The chain is Casein kinase II subunit alpha-2 from Arabidopsis thaliana (Mouse-ear cress).